The following is a 437-amino-acid chain: Adenylosuccinate synthetase (437 aa).

Residues 12 to 18 (GDEGKGK) and 40 to 42 (GHT) each bind GTP. Asp13 (proton acceptor) is an active-site residue. Residues Asp13 and Gly40 each coordinate Mg(2+). IMP-binding positions include 13-16 (DEGK), 38-41 (NAGH), Thr128, Arg142, Gln223, Thr238, and Arg302. The Proton donor role is filled by His41. Position 298 to 304 (298 to 304 (TTTGRRR)) interacts with substrate. GTP-binding positions include Arg304, 330 to 332 (KLD), and 412 to 414 (SLG).

This sequence belongs to the adenylosuccinate synthetase family. As to quaternary structure, homodimer. The cofactor is Mg(2+).

It is found in the cytoplasm. It catalyses the reaction IMP + L-aspartate + GTP = N(6)-(1,2-dicarboxyethyl)-AMP + GDP + phosphate + 2 H(+). It functions in the pathway purine metabolism; AMP biosynthesis via de novo pathway; AMP from IMP: step 1/2. Plays an important role in the de novo pathway of purine nucleotide biosynthesis. Catalyzes the first committed step in the biosynthesis of AMP from IMP. This is Adenylosuccinate synthetase from Prochlorococcus marinus (strain MIT 9211).